Consider the following 37-residue polypeptide: Large ribosomal subunit protein bL36 (37 aa).

The protein belongs to the bacterial ribosomal protein bL36 family.

This Borreliella afzelii (strain PKo) (Borrelia afzelii) protein is Large ribosomal subunit protein bL36.